We begin with the raw amino-acid sequence, 222 residues long: Exosome complex component Rrp4 (222 aa).

The S1 motif domain maps to 63 to 131 (GDLVIGRVTG…EINRVKLTLR (69 aa)).

The protein belongs to the RRP4 family. In terms of assembly, component of the archaeal exosome complex. Forms a trimer of Rrp4 and/or Csl4 subunits. The trimer associates with a hexameric ring-like arrangement composed of 3 Rrp41-Rrp42 heterodimers.

It is found in the cytoplasm. Its function is as follows. Non-catalytic component of the exosome, which is a complex involved in RNA degradation. Increases the RNA binding and the efficiency of RNA degradation. Confers strong poly(A) specificity to the exosome. The sequence is that of Exosome complex component Rrp4 from Methanosphaera stadtmanae (strain ATCC 43021 / DSM 3091 / JCM 11832 / MCB-3).